We begin with the raw amino-acid sequence, 373 residues long: Ras association domain-containing protein 7 (373 aa).

Residues 6-89 (AAMELKVWVD…VQFVLRRTGP (84 aa)) form the Ras-associating domain. The segment at 122-150 (CEPRKTLTPEPAPSLSRPGPAAPVTPTPG) is disordered. Coiled-coil stretches lie at residues 175–227 (WEQE…AAEA) and 248–297 (QERQ…QFIQ). The tract at residues 300–356 (GAALPPPPRPDRGPPGTQGPLPPAREESLLGAPSESHAGAQPRPRGGPHDAELLEVA) is disordered.

As to quaternary structure, interacts with MAP2K7 and GTP-bound NRAS. Post-translationally, polyubiquitinated and degraded by the proteasome upon prolonged stress stimuli.

The protein resides in the cytoplasm. It is found in the cytoskeleton. The protein localises to the microtubule organizing center. It localises to the centrosome. Its function is as follows. Negatively regulates stress-induced JNK activation and apoptosis by promoting MAP2K7 phosphorylation and inhibiting its ability to activate JNK. Following prolonged stress, anti-apoptotic effect stops because of degradation of RASSF7 protein via the ubiquitin-proteasome pathway. Required for the activation of AURKB and chromosomal congression during mitosis where it stimulates microtubule polymerization. This is Ras association domain-containing protein 7 (RASSF7) from Homo sapiens (Human).